Consider the following 474-residue polypeptide: Ribulose bisphosphate carboxylase large chain (474 aa).

Proline 2 is subject to N-acetylproline. Lysine 13 carries the post-translational modification N6,N6,N6-trimethyllysine. Substrate is bound by residues asparagine 122 and threonine 172. The Proton acceptor role is filled by lysine 174. A substrate-binding site is contributed by lysine 176. Positions 200, 202, and 203 each coordinate Mg(2+). Position 200 is an N6-carboxylysine (lysine 200). Histidine 293 serves as the catalytic Proton acceptor. The substrate site is built by arginine 294, histidine 326, and serine 378.

This sequence belongs to the RuBisCO large chain family. Type I subfamily. In terms of assembly, heterohexadecamer of 8 large chains and 8 small chains; disulfide-linked. The disulfide link is formed within the large subunit homodimers. It depends on Mg(2+) as a cofactor. The disulfide bond which can form in the large chain dimeric partners within the hexadecamer appears to be associated with oxidative stress and protein turnover.

The protein localises to the plastid. The protein resides in the chloroplast. It carries out the reaction 2 (2R)-3-phosphoglycerate + 2 H(+) = D-ribulose 1,5-bisphosphate + CO2 + H2O. The enzyme catalyses D-ribulose 1,5-bisphosphate + O2 = 2-phosphoglycolate + (2R)-3-phosphoglycerate + 2 H(+). Functionally, ruBisCO catalyzes two reactions: the carboxylation of D-ribulose 1,5-bisphosphate, the primary event in carbon dioxide fixation, as well as the oxidative fragmentation of the pentose substrate in the photorespiration process. Both reactions occur simultaneously and in competition at the same active site. The protein is Ribulose bisphosphate carboxylase large chain of Oltmannsiellopsis viridis (Marine flagellate).